The primary structure comprises 423 residues: GTPase Obg (423 aa).

Residues 1–158 enclose the Obg domain; the sequence is MFYDEAKIYV…RWLVLELKLL (158 aa). An OBG-type G domain is found at 159–328; that stretch reads ADVGLIGLPN…LLYHVSGLLA (170 aa). GTP contacts are provided by residues 165-172, 190-194, 212-215, 281-284, and 309-311; these read GLPNAGKS, FTTLT, DIPG, NKMD, and SAA. 2 residues coordinate Mg(2+): serine 172 and threonine 192. Residues 336–421 form the OCT domain; sequence VTAPEEEKVT…IGKFEFEYVE (86 aa).

Belongs to the TRAFAC class OBG-HflX-like GTPase superfamily. OBG GTPase family. In terms of assembly, monomer. The cofactor is Mg(2+).

Its subcellular location is the cytoplasm. Its function is as follows. An essential GTPase which binds GTP, GDP and possibly (p)ppGpp with moderate affinity, with high nucleotide exchange rates and a fairly low GTP hydrolysis rate. Plays a role in control of the cell cycle, stress response, ribosome biogenesis and in those bacteria that undergo differentiation, in morphogenesis control. This is GTPase Obg from Moorella thermoacetica (strain ATCC 39073 / JCM 9320).